A 158-amino-acid chain; its full sequence is MNKQRGTYSEVSLAQDPKRQQRKLKGNKISISGTKQEIFQVELNLQNASSDHQGNDKTYHCKGLLPPPEKLTAEVLGIICIVLMATVLKTIVLIPCIGVLEQNNFSLNRRMQKARHCGHCPEEWITYSNSCYYIGKERRTWEERVCWPVLRRTLICFL.

Over residues 1–12 (MNKQRGTYSEVS) the composition is skewed to polar residues. Positions 1–25 (MNKQRGTYSEVSLAQDPKRQQRKLK) are disordered. At 1 to 74 (MNKQRGTYSE…LPPPEKLTAE (74 aa)) the chain is on the cytoplasmic side. Residues 75–95 (VLGIICIVLMATVLKTIVLIP) form a helical; Signal-anchor for type II membrane protein membrane-spanning segment. Topologically, residues 96–158 (CIGVLEQNNF…VLRRTLICFL (63 aa)) are extracellular.

Can form disulfide-bonded heterodimer with CD94. Natural killer cells.

Its subcellular location is the membrane. Functionally, may play a role as a receptor for the recognition of MHC class I HLA-E molecules by NK cells. The chain is NKG2-F type II integral membrane protein (KLRC4) from Homo sapiens (Human).